The sequence spans 202 residues: Large ribosomal subunit protein mL40 (202 aa).

The disordered stretch occupies residues 42–79; it reads IQHQQTASYASKGKSGPPAGMFSGQKAGSKKSKGPKQV.

The protein belongs to the mitochondrion-specific ribosomal protein mL40 family. As to quaternary structure, component of the mitochondrial large ribosomal subunit (mt-LSU). Mature N.crassa 74S mitochondrial ribosomes consist of a small (37S) and a large (54S) subunit. The 37S small subunit contains a 16S ribosomal RNA (16S mt-rRNA) and 32 different proteins. The 54S large subunit contains a 23S rRNA (23S mt-rRNA) and 42 different proteins. mL40 is binding to NAD.

It is found in the mitochondrion. Functionally, component of the mitochondrial ribosome (mitoribosome), a dedicated translation machinery responsible for the synthesis of mitochondrial genome-encoded proteins, including at least some of the essential transmembrane subunits of the mitochondrial respiratory chain. The mitoribosomes are attached to the mitochondrial inner membrane and translation products are cotranslationally integrated into the membrane. The polypeptide is Large ribosomal subunit protein mL40 (mrpl28) (Neurospora crassa (strain ATCC 24698 / 74-OR23-1A / CBS 708.71 / DSM 1257 / FGSC 987)).